Consider the following 184-residue polypeptide: Photosystem I assembly protein Ycf4 (184 aa).

The next 2 helical transmembrane spans lie at 21–43 and 58–80; these read NFCW…FSSY and LFIP…SFYL.

The protein belongs to the Ycf4 family.

The protein localises to the plastid. It is found in the chloroplast thylakoid membrane. Its function is as follows. Seems to be required for the assembly of the photosystem I complex. The polypeptide is Photosystem I assembly protein Ycf4 (Marchantia polymorpha (Common liverwort)).